The primary structure comprises 834 residues: Glycerol-3-phosphate acyltransferase (834 aa).

The short motif at 309-314 (CHRSHI) is the HXXXXD motif element.

The protein belongs to the GPAT/DAPAT family.

Its subcellular location is the cell inner membrane. The catalysed reaction is sn-glycerol 3-phosphate + an acyl-CoA = a 1-acyl-sn-glycero-3-phosphate + CoA. It functions in the pathway phospholipid metabolism; CDP-diacylglycerol biosynthesis; CDP-diacylglycerol from sn-glycerol 3-phosphate: step 1/3. This Pseudomonas paraeruginosa (strain DSM 24068 / PA7) (Pseudomonas aeruginosa (strain PA7)) protein is Glycerol-3-phosphate acyltransferase.